A 474-amino-acid chain; its full sequence is Mitochondrial import inner membrane translocase subunit TIM44-1 (474 aa).

The N-terminal 54 residues, 1-54 (MAIRKIIRDLLITKQPLLRQLFHQRVLRANARSEFLPAIGYTSHRRFSVFTEFS), are a transit peptide targeting the mitochondrion. Positions 68–88 (ERTVKELKERTEEFKGVTEDL) form a coiled coil. Residues 132-143 (VKESFKLGKEEN) show a composition bias toward basic and acidic residues. Residues 132 to 165 (VKESFKLGKEENAESASSSGTRASQGEKQQSGST) are disordered. Residues 145–165 (ESASSSGTRASQGEKQQSGST) are compositionally biased toward polar residues.

The protein belongs to the Tim44 family. In terms of assembly, probable component of the PAM complex at least composed of a mitochondrial HSP70 protein, TIMM44 and TIMM14. The complex interacts with the TIMM23 component of the TIM17:23 complex. Expressed in roots, flowers, young cotyledons and leaves.

The protein localises to the mitochondrion inner membrane. Functionally, essential component of the PAM complex, a complex required for the translocation of transit peptide-containing proteins from the inner membrane into the mitochondrial matrix in an ATP-dependent manner. Recruits mitochondrial HSP70 to drive protein translocation into the matrix using ATP as an energy source. The polypeptide is Mitochondrial import inner membrane translocase subunit TIM44-1 (TIM44-1) (Arabidopsis thaliana (Mouse-ear cress)).